The following is a 373-amino-acid chain: MSEDTSQPTDQQAGTALRRGWTTGACAAAAARAAFTGLVSGSFPDPVTIRLPRDRSPAFALAVHACGDGWARAGVIKDAGDDPDVTHGALVSVTARPGAPGRGVQLRAGPGVGTVRRSGLPVAAGEPAINPGPRGYIEQGIAEAAAALSAPTDVTLELAIEDGERLAAQTLNPRLGIEGGLSVLGTTGLLVPFSCAAWIDAIQRGIDVARAAGIEHVAGSTGRTSEQAVQAYHQLPDEALIDMGDFVGGMLKYLRRYPVPRVTIAGGVAKITKLAQGFLDVHSRRGQADLAALAETAGRLGADATCREVMATANTVAEAFDRAQAAGLPLGDAVAREAQQTALNLIDPACSEVEVLLFDRRGQRVGRAGWARD.

This sequence belongs to the CbiD family.

The enzyme catalyses Co-precorrin-5B + S-adenosyl-L-methionine = Co-precorrin-6A + S-adenosyl-L-homocysteine. It functions in the pathway cofactor biosynthesis; adenosylcobalamin biosynthesis; cob(II)yrinate a,c-diamide from sirohydrochlorin (anaerobic route): step 6/10. In terms of biological role, catalyzes the methylation of C-1 in cobalt-precorrin-5B to form cobalt-precorrin-6A. In Halorhodospira halophila (strain DSM 244 / SL1) (Ectothiorhodospira halophila (strain DSM 244 / SL1)), this protein is Cobalt-precorrin-5B C(1)-methyltransferase.